The sequence spans 347 residues: Olfactory receptor 6J1 (347 aa).

Residues 1-24 (MGNWTAAVTEFVLLGFSLSREVEL) lie on the Extracellular side of the membrane. A glycan (N-linked (GlcNAc...) asparagine) is linked at Asn-3. A helical transmembrane segment spans residues 25-45 (LLLVLLLPTFLLTLLGNLLII). The Cytoplasmic portion of the chain corresponds to 46–53 (STVLSCSR). The chain crosses the membrane as a helical span at residues 54 to 74 (LHTPMYFFLCNLSILDILFTS). Over 75 to 98 (VISPKVLANLGSRDKTISFAGCIT) the chain is Extracellular. A disulfide bridge links Cys-96 with Cys-188. The chain crosses the membrane as a helical span at residues 99-119 (QCYFYFFLGTVEFLLLTVMSY). The Cytoplasmic segment spans residues 120–138 (DRYATICCPLRYTTIMRPS). A helical membrane pass occupies residues 139-159 (VCIGTVVFSWVGGFLSVLFPT). At 160-196 (ILISQLPFCGSNIINHFFCDSGPLLALACADTTAIEL) the chain is on the extracellular side. The helical transmembrane segment at 197-216 (MDFMLSSMVILCCIVLVAYS) threads the bilayer. Over 217–236 (YTYIILTIVRIPSASGRKKA) the chain is Cytoplasmic. Residues 237–257 (FNTCASHLTIVIISSGITVFI) form a helical membrane-spanning segment. The Extracellular segment spans residues 258-270 (YVTPSQKEYLEIN). A helical membrane pass occupies residues 271-291 (KIPLVLSSVVTPFLNPFIYTL). Residues 292–347 (RNDTVQGVLRDVWVRVRGVFEKRMRAVLRSRLSSNKDHQGRACSSPPCVYSVKLQC) lie on the Cytoplasmic side of the membrane.

This sequence belongs to the G-protein coupled receptor 1 family.

Its subcellular location is the cell membrane. Odorant receptor. In Homo sapiens (Human), this protein is Olfactory receptor 6J1 (OR6J1).